Consider the following 112-residue polypeptide: MQNLASQIQEKAVDSQQQLRTIMVQIAAKERALKISELAKKELEDVGEDKAVYTSLGKMFMKSDLASVRTHLDAEMASLREDIEALQKKQTYHETTASNAEQHLQKIKESIS.

The protein belongs to the prefoldin subunit beta family. In terms of assembly, heterohexamer of two PFD-alpha type and four PFD-beta type subunits.

In terms of biological role, binds specifically to cytosolic chaperonin (c-CPN) and transfers target proteins to it. Binds to nascent polypeptide chain and promotes folding in an environment in which there are many competing pathways for nonnative proteins. The polypeptide is Probable prefoldin subunit 1 (Schizosaccharomyces pombe (strain 972 / ATCC 24843) (Fission yeast)).